Here is a 347-residue protein sequence, read N- to C-terminus: Probable dual-specificity RNA methyltransferase RlmN (347 aa).

Catalysis depends on glutamate 94, which acts as the Proton acceptor. Positions 100 to 319 (YPSRTIACIS…LDTLVKNGID (220 aa)) constitute a Radical SAM core domain. A disulfide bridge links cysteine 107 with cysteine 334. Residues cysteine 114, cysteine 118, and cysteine 121 each contribute to the [4Fe-4S] cluster site. S-adenosyl-L-methionine-binding positions include 161–162 (GE), serine 193, 216–218 (SLH), and asparagine 292. The active-site S-methylcysteine intermediate is the cysteine 334.

Belongs to the radical SAM superfamily. RlmN family. Requires [4Fe-4S] cluster as cofactor.

Its subcellular location is the cytoplasm. The enzyme catalyses adenosine(2503) in 23S rRNA + 2 reduced [2Fe-2S]-[ferredoxin] + 2 S-adenosyl-L-methionine = 2-methyladenosine(2503) in 23S rRNA + 5'-deoxyadenosine + L-methionine + 2 oxidized [2Fe-2S]-[ferredoxin] + S-adenosyl-L-homocysteine. It carries out the reaction adenosine(37) in tRNA + 2 reduced [2Fe-2S]-[ferredoxin] + 2 S-adenosyl-L-methionine = 2-methyladenosine(37) in tRNA + 5'-deoxyadenosine + L-methionine + 2 oxidized [2Fe-2S]-[ferredoxin] + S-adenosyl-L-homocysteine. In terms of biological role, specifically methylates position 2 of adenine 2503 in 23S rRNA and position 2 of adenine 37 in tRNAs. The polypeptide is Probable dual-specificity RNA methyltransferase RlmN (Petrotoga mobilis (strain DSM 10674 / SJ95)).